The sequence spans 1829 residues: Iron-regulated protein FrpC (1829 aa).

Hemolysin-type calcium-binding repeat units lie at residues 869–886 (FGHN…NDTL), 887–904 (IGGA…SDTY), 1015–1032 (NGGL…DDLL), 1033–1050 (NGDA…NDTL), 1051–1068 (DGGE…NDAL), 1069–1086 (NGGE…NDTL), 1087–1104 (IGGA…SDTY), 1215–1232 (NGGL…DDLL), 1233–1250 (NGDA…NDTL), 1251–1268 (DGGE…NDAL), 1269–1286 (NGGE…NDTL), 1287–1304 (IGGA…SDTY), 1415–1432 (NGGL…DDLL), 1433–1450 (NGDA…NDTL), 1451–1468 (NGGE…NDAL), 1469–1486 (NGGE…NDTL), 1487–1504 (IGGA…SDTY), 1615–1632 (NGGL…DDLL), 1633–1650 (NGDA…NDTL), 1651–1668 (DGGE…NDAL), 1669–1686 (NGGE…NDTL), and 1687–1704 (IGGA…SDTY). The segment at 1671–1690 (GEGNDHLNGEDGNDTLIGGA) is disordered.

Belongs to the RTX prokaryotic toxin (TC 1.C.11) family.

It is found in the cell outer membrane. Its subcellular location is the secreted. Functionally, may participate in the pathogenesis of meningococcal disease. The sequence is that of Iron-regulated protein FrpC (frpC) from Neisseria meningitidis serogroup B (strain ATCC BAA-335 / MC58).